We begin with the raw amino-acid sequence, 115 residues long: NAD(P)H-quinone oxidoreductase subunit M (115 aa).

It belongs to the complex I NdhM subunit family. NDH-1 can be composed of about 15 different subunits; different subcomplexes with different compositions have been identified which probably have different functions.

The protein localises to the cellular thylakoid membrane. The catalysed reaction is a plastoquinone + NADH + (n+1) H(+)(in) = a plastoquinol + NAD(+) + n H(+)(out). It carries out the reaction a plastoquinone + NADPH + (n+1) H(+)(in) = a plastoquinol + NADP(+) + n H(+)(out). Functionally, NDH-1 shuttles electrons from an unknown electron donor, via FMN and iron-sulfur (Fe-S) centers, to quinones in the respiratory and/or the photosynthetic chain. The immediate electron acceptor for the enzyme in this species is believed to be plastoquinone. Couples the redox reaction to proton translocation, and thus conserves the redox energy in a proton gradient. Cyanobacterial NDH-1 also plays a role in inorganic carbon-concentration. In Synechococcus sp. (strain CC9605), this protein is NAD(P)H-quinone oxidoreductase subunit M.